The primary structure comprises 444 residues: ATP-dependent protease ATPase subunit HslU (444 aa).

ATP is bound by residues Ile18 and 60-65 (GVGKTE). Positions 141 to 161 (DAWGNNEEGNNDSGTRQSFRK) are disordered. Over residues 147 to 157 (EEGNNDSGTRQ) the composition is skewed to polar residues. Positions 257, 322, and 394 each coordinate ATP.

It belongs to the ClpX chaperone family. HslU subfamily. As to quaternary structure, a double ring-shaped homohexamer of HslV is capped on each side by a ring-shaped HslU homohexamer. The assembly of the HslU/HslV complex is dependent on binding of ATP.

It localises to the cytoplasm. Functionally, ATPase subunit of a proteasome-like degradation complex; this subunit has chaperone activity. The binding of ATP and its subsequent hydrolysis by HslU are essential for unfolding of protein substrates subsequently hydrolyzed by HslV. HslU recognizes the N-terminal part of its protein substrates and unfolds these before they are guided to HslV for hydrolysis. In Aliivibrio fischeri (strain ATCC 700601 / ES114) (Vibrio fischeri), this protein is ATP-dependent protease ATPase subunit HslU.